Consider the following 425-residue polypeptide: MKVLGVIVEYNPFHNGHLYHLQQAKKIVSPDYVIAIMSGNFCQRGEPAIINKFARAEIALKNGIDVVFELPTVYALQDAGGFAFGAITLLDKLTVVTDVVFGSESADKNFITTVAKTLLENPDKFDNLLKIELKKGLSFPNARKFALKKFLNENEDFLKMIENSNDILGIEYVKSILKLKSKINYHLIKRIGAKYNDTELESKYSSATAIRNAIVRNNPFETYVPQTSYKVLKREFSYGRGPVSLENMEQFILTFLRLKHRKDFESIYSFTEGLDQRFIKAIKTSKKLSDFLEKVKTKRFTYSRIRRAIFHALFDFKKEYIEFSNKLGTQYARILGFTKKGQKLLSKIKKASKIPIISNPSLHEKVLKKVLTDKDRKWEVNKKLFIWQFEKDIVASNIYTMFYPQKNERKYGLDFRKPIIEGENE.

ATP is bound by residues 7–20 (IVEYNPFHNGHLYH), glycine 102, asparagine 165, and 190–191 (RI).

It belongs to the TmcAL family.

The protein resides in the cytoplasm. It catalyses the reaction cytidine(34) in elongator tRNA(Met) + acetate + ATP = N(4)-acetylcytidine(34) in elongator tRNA(Met) + AMP + diphosphate. Functionally, catalyzes the formation of N(4)-acetylcytidine (ac(4)C) at the wobble position of elongator tRNA(Met), using acetate and ATP as substrates. First activates an acetate ion to form acetyladenylate (Ac-AMP) and then transfers the acetyl group to tRNA to form ac(4)C34. This Thermosipho melanesiensis (strain DSM 12029 / CIP 104789 / BI429) protein is tRNA(Met) cytidine acetate ligase.